Reading from the N-terminus, the 176-residue chain is Protein FimF (176 aa).

Positions 1–20 (MRNKPFYLLCAFLWLAVSHA) are cleaved as a signal peptide. A disulfide bridge links Cys-38 with Cys-78.

This sequence belongs to the fimbrial protein family.

Its subcellular location is the fimbrium. Involved in regulation of length and mediation of adhesion of type 1 fimbriae (but not necessary for the production of fimbriae). Involved in the integration of FimH in the fimbriae. The polypeptide is Protein FimF (fimF) (Escherichia coli (strain K12)).